The sequence spans 261 residues: Cell division protein DivIB (261 aa).

The Cytoplasmic portion of the chain corresponds to 1–27 (MEKGKVVVLEDRVPKLKERRRQKANRR). Residues 28-48 (LIAYLSFFFLFILCVLYFQSP) traverse the membrane as a helical segment. An alpha region spans residues 47–117 (SPLGAVGHVE…PNTIAIHVRE (71 aa)). Residues 49 to 261 (LGAVGHVEVS…KEDGDETTSP (213 aa)) lie on the Extracellular side of the membrane. The POTRA domain occupies 50 to 118 (GAVGHVEVSG…NTIAIHVREW (69 aa)). A beta region spans residues 118 to 230 (WRRIAYVYDR…YPAIAAALDR (113 aa)). The gamma stretch occupies residues 231–260 (NVKGVIHLEVGSYFVPYSPPKKEDGDETTS).

It belongs to the FtsQ/DivIB family. DivIB subfamily.

The protein localises to the cell membrane. Functionally, cell division protein that may be involved in stabilizing or promoting the assembly of the division complex. The polypeptide is Cell division protein DivIB (Geobacillus kaustophilus (strain HTA426)).